The sequence spans 256 residues: MGRGRVQLKRIENKINRQVTFSKRRAGLMKKAHEISVLCDAEVALVVFSHKGKLFEYSTDSCMEKILERYERYSYAERQLIAPESDSNTNWSMEYNRLKAKIELLERNQRHYLGEDLQAMSPKELQNLEQQLDTALKHIRSRKNQLMYDSINELQRKEKAIQEQNSMLSKQIKERENVLRAQQEQWDEQNHGHNMPPPPPPQQHQIQHPYMLSHQPSPFLNMGGLYQEEDQMAMRRNDLDLSLEPVYNCNLGCFAA.

The MADS-box domain occupies 1-61 (MGRGRVQLKR…GKLFEYSTDS (61 aa)). Residues 88–178 (NTNWSMEYNR…SKQIKERENV (91 aa)) form the K-box domain. Residues 187–206 (DEQNHGHNMPPPPPPQQHQI) are disordered.

Homodimer capable of binding to CArG-box sequences.

The protein resides in the nucleus. Transcription factor that promotes early floral meristem identity in synergy with LEAFY. Displays a redundant function with CAULIFLOWER in the up-regulation of LEAFY. Required subsequently for the transition of an inflorescence meristem into a floral meristem, and for the normal development of sepals and petals in flowers. Regulates positively B class homeotic proteins. This is Floral homeotic protein APETALA 1-2 (2AP1) from Brassica oleracea var. italica (Broccoli).